We begin with the raw amino-acid sequence, 147 residues long: SsrA-binding protein (147 aa).

A disordered region spans residues 124-147; sequence KKHDKRQDIKDRDWARKQARQDFS. Positions 128–147 are enriched in basic and acidic residues; it reads KRQDIKDRDWARKQARQDFS.

It belongs to the SmpB family.

Its subcellular location is the cytoplasm. Functionally, required for rescue of stalled ribosomes mediated by trans-translation. Binds to transfer-messenger RNA (tmRNA), required for stable association of tmRNA with ribosomes. tmRNA and SmpB together mimic tRNA shape, replacing the anticodon stem-loop with SmpB. tmRNA is encoded by the ssrA gene; the 2 termini fold to resemble tRNA(Ala) and it encodes a 'tag peptide', a short internal open reading frame. During trans-translation Ala-aminoacylated tmRNA acts like a tRNA, entering the A-site of stalled ribosomes, displacing the stalled mRNA. The ribosome then switches to translate the ORF on the tmRNA; the nascent peptide is terminated with the 'tag peptide' encoded by the tmRNA and targeted for degradation. The ribosome is freed to recommence translation, which seems to be the essential function of trans-translation. The chain is SsrA-binding protein from Neorickettsia sennetsu (strain ATCC VR-367 / Miyayama) (Ehrlichia sennetsu).